The sequence spans 321 residues: Ferrochelatase (321 aa).

2 residues coordinate Fe cation: His194 and Glu275.

It belongs to the ferrochelatase family.

It is found in the cytoplasm. The enzyme catalyses heme b + 2 H(+) = protoporphyrin IX + Fe(2+). Its pathway is porphyrin-containing compound metabolism; protoheme biosynthesis; protoheme from protoporphyrin-IX: step 1/1. Its function is as follows. Catalyzes the ferrous insertion into protoporphyrin IX. This chain is Ferrochelatase, found in Wigglesworthia glossinidia brevipalpis.